A 399-amino-acid polypeptide reads, in one-letter code: Lipase member K (399 aa).

Positions 1–19 (MWQLLAAACWMLLLGSMYG) are cleaved as a signal peptide. One can recognise an AB hydrolase-1 domain in the interval 78–378 (PAVYLQHGLI…HYNHVDFYLG (301 aa)). The active-site Nucleophile is the Ser-172. A disulfide bridge links Cys-246 with Cys-255. N-linked (GlcNAc...) asparagine glycosylation is found at Asn-271 and Asn-327. Active-site charge relay system residues include Asp-343 and His-372.

The protein belongs to the AB hydrolase superfamily. Lipase family. Exclusively expressed in the epidermis within the granular keratinocytes.

The protein resides in the secreted. Its function is as follows. Plays a highly specific role in the last step of keratinocyte differentiation. May have an essential function in lipid metabolism of the most differentiated epidermal layers. This chain is Lipase member K (LIPK), found in Homo sapiens (Human).